The chain runs to 604 residues: Inositol-3-phosphate synthase 1 (604 aa).

Residues Gly-88, Gly-89, Asn-90, Asn-91, Asp-163, Ser-198, Val-199, Gln-210, Arg-213, Ser-251, Gly-252, Asn-253, Thr-254, Ser-303, Asp-327, Leu-328, Thr-330, Asn-361, Asn-362, Asp-363, Lys-376, Gly-456, Asp-457, Asp-485, and Ser-486 each coordinate NAD(+).

It belongs to the myo-inositol 1-phosphate synthase family. NAD(+) serves as cofactor.

The catalysed reaction is D-glucose 6-phosphate = 1D-myo-inositol 3-phosphate. It functions in the pathway polyol metabolism; myo-inositol biosynthesis; myo-inositol from D-glucose 6-phosphate: step 1/2. Its function is as follows. Key enzyme in myo-inositol biosynthesis pathway that catalyzes the conversion of glucose 6-phosphate to 1-myo-inositol 1-phosphate in a NAD-dependent manner. Rate-limiting enzyme in the synthesis of all inositol-containing compounds. De novo-synthesized myo-inositol is essential for incorporation into GPI (glycosylphosphatidylinositol) glycolipids during intra-erythrocytic development. The sequence is that of Inositol-3-phosphate synthase 1 from Plasmodium falciparum (isolate 3D7).